The sequence spans 444 residues: Adenylosuccinate lyase (444 aa).

N(6)-(1,2-dicarboxyethyl)-AMP is bound by residues 9 to 10 (RY), 73 to 75 (KHD), and 97 to 98 (TS). The active-site Proton donor/acceptor is the His-145. Gln-219 contacts N(6)-(1,2-dicarboxyethyl)-AMP. The active-site Proton donor/acceptor is Ser-269. N(6)-(1,2-dicarboxyethyl)-AMP is bound by residues Ser-270, 275-277 (KRN), Asn-283, and 314-318 (SAERI).

This sequence belongs to the lyase 1 family. Adenylosuccinate lyase subfamily. Homotetramer. Residues from neighboring subunits contribute catalytic and substrate-binding residues to each active site.

It catalyses the reaction N(6)-(1,2-dicarboxyethyl)-AMP = fumarate + AMP. The catalysed reaction is (2S)-2-[5-amino-1-(5-phospho-beta-D-ribosyl)imidazole-4-carboxamido]succinate = 5-amino-1-(5-phospho-beta-D-ribosyl)imidazole-4-carboxamide + fumarate. It functions in the pathway purine metabolism; AMP biosynthesis via de novo pathway; AMP from IMP: step 2/2. The protein operates within purine metabolism; IMP biosynthesis via de novo pathway; 5-amino-1-(5-phospho-D-ribosyl)imidazole-4-carboxamide from 5-amino-1-(5-phospho-D-ribosyl)imidazole-4-carboxylate: step 2/2. Catalyzes two reactions in de novo purine nucleotide biosynthesis. Catalyzes the breakdown of 5-aminoimidazole- (N-succinylocarboxamide) ribotide (SAICAR or 2-[5-amino-1-(5-phospho-beta-D-ribosyl)imidazole-4-carboxamido]succinate) to 5-aminoimidazole-4-carboxamide ribotide (AICAR or 5-amino-1-(5-phospho-beta-D-ribosyl)imidazole-4-carboxamide) and fumarate, and of adenylosuccinate (ADS or N(6)-(1,2-dicarboxyethyl)-AMP) to adenosine monophosphate (AMP) and fumarate. The chain is Adenylosuccinate lyase (purB) from Archaeoglobus fulgidus (strain ATCC 49558 / DSM 4304 / JCM 9628 / NBRC 100126 / VC-16).